A 675-amino-acid chain; its full sequence is Alpha-1,4-glucan:maltose-1-phosphate maltosyltransferase 1 (675 aa).

3 residues coordinate alpha-maltose 1-phosphate: Lys264, Gln324, and Asp359. Residue Asp394 is the Nucleophile of the active site. Asn395 is a binding site for alpha-maltose 1-phosphate. Glu423 serves as the catalytic Proton donor. 534-535 (KY) is a binding site for alpha-maltose 1-phosphate.

This sequence belongs to the glycosyl hydrolase 13 family. GlgE subfamily. As to quaternary structure, homodimer.

The catalysed reaction is alpha-maltose 1-phosphate + [(1-&gt;4)-alpha-D-glucosyl](n) = [(1-&gt;4)-alpha-D-glucosyl](n+2) + phosphate. Is competitively inhibited by alpha-, beta- and gamma-cyclodextrins (cyclic maltooligosaccharides), unlike GlgE from M.tuberculosis. Maltosyltransferase that uses maltose 1-phosphate (M1P) as the sugar donor to elongate linear or branched alpha-(1-&gt;4)-glucans. Maltooligosaccharides with a degree of polymerization (DP) superior or equal to 4 are efficient acceptors, with DP6 being optimal in the GlgE-catalyzed polymerization with M1P. Is specific for the alpha-anomer of M1P as substrate, since the beta-anomer of M1P gives no activity. Alpha-D-glucose 1-phosphate cannot serve as a donor substrate, but alpha-maltosyl fluoride is an efficient donor in vitro. Exhibits an alpha-retaining catalytic mechanism, with evidence that maltooligosaccharide acceptors are extended at their non-reducing ends. Is also able to catalyze the reverse reaction in vitro, releasing M1P from glycogen or maltoheptaose in the presence of inorganic phosphate. Also catalyzes disproportionation reactions through maltosyl transfer between maltooligosaccharides. Is probably involved in a branched alpha-glucan biosynthetic pathway from trehalose, together with TreS, Mak and GlgB. The protein is Alpha-1,4-glucan:maltose-1-phosphate maltosyltransferase 1 (glgE1) of Streptomyces coelicolor (strain ATCC BAA-471 / A3(2) / M145).